Here is a 741-residue protein sequence, read N- to C-terminus: Cysteine--tRNA ligase, cytoplasmic (741 aa).

Cys-46 contributes to the Zn(2+) binding site. Positions 48–58 match the 'HIGH' region motif; that stretch reads PTVYDASHMGH. At Ser-297 the chain carries Phosphoserine. 3 residues coordinate Zn(2+): Cys-340, His-365, and Glu-369. Residues 398–402 carry the 'KMSKS' region motif; that stretch reads KMSKS. Position 401 (Lys-401) interacts with ATP.

The protein belongs to the class-I aminoacyl-tRNA synthetase family. Zn(2+) serves as cofactor.

Its subcellular location is the cytoplasm. It catalyses the reaction tRNA(Cys) + L-cysteine + ATP = L-cysteinyl-tRNA(Cys) + AMP + diphosphate. This Drosophila pseudoobscura pseudoobscura (Fruit fly) protein is Cysteine--tRNA ligase, cytoplasmic (Aats-cys).